A 673-amino-acid chain; its full sequence is Vasorin (673 aa).

The first 23 residues, 1 to 23 (MCSRVPLLLPLLLLLALGPGVQG), serve as a signal peptide directing secretion. The LRRNT domain maps to 24–51 (CPSGCQCSQPQTVFCTARQGTTVPRDVP). Over 24 to 575 (CPSGCQCSQP…VTQAREGNLP (552 aa)) the chain is Extracellular. LRR repeat units lie at residues 52 to 74 (PDTVGLYVFENGITMLDAGSFAG), 77 to 98 (GLQLLDLSQNQIASLPSGVFQP), 101 to 122 (NLSNLDLTANRLHEITNETFRG), 125 to 146 (RLERLYLGKNRIRHIQPGAFDT), 149 to 170 (RLLELKLQDNELRALPPLRLPR), 171 to 191 (LLLLDLSHNSLLALEPGILDT), 193 to 214 (NVEALRLAGLGLQQLDEGLFSR), 217 to 238 (NLHDLDVSDNQLERVPPVIRGL), 240 to 262 (GLTRLRLAGNTRIAQLRPEDLAG), and 265 to 287 (ALQELDVSNLSLQALPGDLSGLF). Residue N101 is glycosylated (N-linked (GlcNAc...) asparagine). N117 is a glycosylation site (N-linked (GlcNAc...) (complex) asparagine). N273 carries an N-linked (GlcNAc...) asparagine glycan. The LRRCT domain occupies 298–351 (NPFNCVCPLSWFGPWVRESHVTLASPEETRCHFPPKNAGRLLLELDYADFGCPA). Low complexity predominate over residues 358–370 (VPTTRPVVREPTA). Residues 358–404 (VPTTRPVVREPTALSSSLAPTWLSPTEPATEAPSPPSTAPPTVGPVP) form a disordered region. A compositionally biased stretch (pro residues) spans 390 to 404 (PSPPSTAPPTVGPVP). The EGF-like domain maps to 405–442 (QPQDCPPSTCLNGGTCHLGTRHHLACLCPEGFTGLYCE). 3 disulfide bridges follow: C409–C420, C414–C430, and C432–C441. The region spanning 460–558 (PPRSLTLGIE…ACGEAHTPPA (99 aa)) is the Fibronectin type-III domain. 2 N-linked (GlcNAc...) asparagine glycosylation sites follow: N500 and N528. A helical transmembrane segment spans residues 576–596 (LLIAPALAAVLLAALAAVGAA). Residues 597–673 (YCVRRGRAMA…QSPLHAKPYI (77 aa)) are Cytoplasmic-facing.

Interacts with TGFB1, TGFB2 and TGFB3. N-glycosylated. N-glycan heterogeneity at Asn-117: Hex5HexNAc4 (minor), dHex1Hex5HexNAc4 (major), Hex6HexNAc5 (minor) and dHex1Hex6HexNAc5 (minor). As to expression, expressed at highest levels in aorta, at intermediate levels in kidney and placenta and at lowest levels in brain, heart, liver, lung and skeletal muscle. Within the aorta, the strongest expression is found in the tunica media of the proximal ascending aorta, the descending thoracic aorta, the abdominal aorta and the coronary arteries. Within the kidney, expression is found in the interstitial cells.

It is found in the membrane. The protein resides in the secreted. May act as an inhibitor of TGF-beta signaling. The protein is Vasorin (VASN) of Homo sapiens (Human).